The primary structure comprises 693 residues: Glycine--tRNA ligase beta subunit (693 aa).

The protein belongs to the class-II aminoacyl-tRNA synthetase family. Tetramer of two alpha and two beta subunits.

It localises to the cytoplasm. It catalyses the reaction tRNA(Gly) + glycine + ATP = glycyl-tRNA(Gly) + AMP + diphosphate. The protein is Glycine--tRNA ligase beta subunit of Shouchella clausii (strain KSM-K16) (Alkalihalobacillus clausii).